A 68-amino-acid chain; its full sequence is UPF0435 protein SA1696 (68 aa).

This sequence belongs to the UPF0435 family.

The chain is UPF0435 protein SA1696 from Staphylococcus aureus (strain N315).